Consider the following 133-residue polypeptide: MPVEYLVDASALYALAAHYDKWIKHREKLAILHLTIYEAGNALWKEARLGRVDWAAASRHLKKVLSSFKVLEDPPLDEVLRVAVERGLTFYDASYAYVAESSGLVLVTQDRELLAKTKGAIDVETLLVRLAAQ.

Residues 5 to 113 (YLVDASALYA…LVLVTQDREL (109 aa)) form the PINc domain. Positions 8, 92, and 110 each coordinate Mg(2+).

It belongs to the PINc/VapC protein family. In terms of assembly, homodimer, 2 of which then form a homotetramer. It depends on Mg(2+) as a cofactor.

Inhibited by EDTA. In terms of biological role, toxic component of a type II toxin-antitoxin (TA) system. Its function is as follows. Has ribonuclease activity. Has a slow ssDNA exonuclease activity. The protein is Exonuclease VapC9 of Pyrobaculum aerophilum (strain ATCC 51768 / DSM 7523 / JCM 9630 / CIP 104966 / NBRC 100827 / IM2).